Consider the following 174-residue polypeptide: Ribosome maturation factor RimP (174 aa).

Belongs to the RimP family.

It is found in the cytoplasm. In terms of biological role, required for maturation of 30S ribosomal subunits. The sequence is that of Ribosome maturation factor RimP from Acinetobacter baumannii (strain AB307-0294).